We begin with the raw amino-acid sequence, 427 residues long: Inward rectifier potassium channel 2 (427 aa).

At 1-81 (MGSVRTNRYS…IFTTCVDIRW (81 aa)) the chain is on the cytoplasmic side. S-nitrosocysteine is present on C76. A helical transmembrane segment spans residues 82 to 106 (RWMLVIFCLAFVLSWLFFGCVFWLI). The Extracellular segment spans residues 107 to 128 (ALLHGDLDASKESKACVSEVNS). The segment at residues 129-140 (FTAAFLFSIETQ) is an intramembrane region (helical; Pore-forming). Positions 141 to 147 (TTIGYGF) form an intramembrane region, pore-forming. The short motif at 142–147 (TIGYGF) is the Selectivity filter element. Topologically, residues 148 to 156 (RCVTDECPI) are extracellular. A helical membrane pass occupies residues 157-178 (AVFMVVFQSIVGCIIDAFIIGA). Over 179–427 (VMAKMAKPKK…PRPLRRESEI (249 aa)) the chain is Cytoplasmic. The segment at 181 to 208 (AKMAKPKKRNETLVFSHNAVIAMRDGKL) is polyphosphoinositide (PIP2)-binding. A disordered region spans residues 384–427 (SKEEDDSENGVPESTSTDTPPDIDLHNQASVPLEPRPLRRESEI). A PDZ-binding motif is present at residues 425–427 (SEI).

It belongs to the inward rectifier-type potassium channel (TC 1.A.2.1) family. KCNJ2 subfamily. Homotetramer. Homomultimeric and heteromultimeric association with KCNJ4/Kir2.3. Can form heteromeric channels with Kir2.6/KCNJ18. Associates, via its PDZ-recognition domain, with a complex containing LIN7A, LIN7B, LIN7C, DLG1, CASK and APBA1. Post-translationally, S-nitrosylation increases the open probability and inward rectifying currents.

It localises to the cell membrane. Its subcellular location is the sarcolemma. The protein resides in the T-tubule. It catalyses the reaction K(+)(in) = K(+)(out). Its activity is regulated as follows. Activated by phosphatidylinositol 4,5 biphosphate (PtdIns(4,5)P2). Its function is as follows. Inward rectifier potassium channels are characterized by a greater tendency to allow potassium to flow into the cell rather than out of it. Their voltage dependence is regulated by the concentration of extracellular potassium; as external potassium is raised, the voltage range of the channel opening shifts to more positive voltages. The inward rectification is mainly due to the blockage of outward current by internal magnesium. Blocked by external barium or cesium. Probably participates in establishing action potential waveform and excitability of neuronal and muscle tissues. The protein is Inward rectifier potassium channel 2 (KCNJ2) of Cavia porcellus (Guinea pig).